We begin with the raw amino-acid sequence, 477 residues long: tRNA-2-methylthio-N(6)-dimethylallyladenosine synthase (477 aa).

The 118-residue stretch at 3–120 (KKLHIKTWGC…LPAMIKQVQE (118 aa)) folds into the MTTase N-terminal domain. 6 residues coordinate [4Fe-4S] cluster: cysteine 12, cysteine 49, cysteine 83, cysteine 157, cysteine 161, and cysteine 164. A Radical SAM core domain is found at 143–375 (RAEGATAFVS…QHVINNQSMQ (233 aa)). Positions 378 to 441 (RAMLGSTQRI…PNSLRGRFIR (64 aa)) constitute a TRAM domain.

Belongs to the methylthiotransferase family. MiaB subfamily. In terms of assembly, monomer. It depends on [4Fe-4S] cluster as a cofactor.

The protein resides in the cytoplasm. The enzyme catalyses N(6)-dimethylallyladenosine(37) in tRNA + (sulfur carrier)-SH + AH2 + 2 S-adenosyl-L-methionine = 2-methylsulfanyl-N(6)-dimethylallyladenosine(37) in tRNA + (sulfur carrier)-H + 5'-deoxyadenosine + L-methionine + A + S-adenosyl-L-homocysteine + 2 H(+). In terms of biological role, catalyzes the methylthiolation of N6-(dimethylallyl)adenosine (i(6)A), leading to the formation of 2-methylthio-N6-(dimethylallyl)adenosine (ms(2)i(6)A) at position 37 in tRNAs that read codons beginning with uridine. The chain is tRNA-2-methylthio-N(6)-dimethylallyladenosine synthase from Aeromonas salmonicida (strain A449).